We begin with the raw amino-acid sequence, 568 residues long: uncharacterized protein (568 aa).

Over residues 334-346 (DDNEEKNNDRPKI) the composition is skewed to basic and acidic residues. Disordered regions lie at residues 334-382 (DDNE…NDQN) and 436-479 (QVEE…SCKN). The span at 458 to 477 (KIASSASKNDNSNNKNSKSC) shows a compositional bias: low complexity.

This sequence to yeast YJL043w.

This is an uncharacterized protein from Saccharomyces cerevisiae (strain ATCC 204508 / S288c) (Baker's yeast).